A 204-amino-acid chain; its full sequence is High frequency lysogenization protein HflD homolog (204 aa).

It belongs to the HflD family.

It localises to the cytoplasm. The protein resides in the cell inner membrane. The chain is High frequency lysogenization protein HflD homolog from Aeromonas hydrophila subsp. hydrophila (strain ATCC 7966 / DSM 30187 / BCRC 13018 / CCUG 14551 / JCM 1027 / KCTC 2358 / NCIMB 9240 / NCTC 8049).